The following is a 1915-amino-acid chain: Methylcytosine dioxygenase tet3-B (1915 aa).

The tract at residues 28–49 (RLRVSEMPSELNGGGDGSKGDG) is disordered. The segment at 61–102 (SNKKRKRCGVCVPCLRKEPCGTCYNCVNRSTSHQICKMRKCE) adopts a CXXC-type zinc-finger fold. Zn(2+)-binding residues include Cys-68, Cys-71, Cys-74, Cys-80, Cys-83, Cys-86, Cys-96, and Cys-101. Residues 629-638 (PNSQQAPVSK) show a composition bias toward polar residues. Disordered stretches follow at residues 629–679 (PNSQ…RVKE), 776–806 (GRCP…VPGQ), and 831–880 (FSLP…LSNN). Over residues 664-676 (KPPRKQVQIKKPR) the composition is skewed to basic residues. Over residues 779–793 (PTPSTGDSSSGQGDS) the composition is skewed to low complexity. Polar residues-rich tracts occupy residues 838 to 854 (VPSQ…TSGV) and 864 to 880 (QLPS…LSNN). Zn(2+) is bound by residues Cys-974, Cys-976, Cys-1034, His-1060, and Cys-1062. Arg-1102 provides a ligand contact to 2-oxoglutarate. Residues Cys-1112, Cys-1114, Cys-1130, Cys-1139, and Cys-1199 each contribute to the Zn(2+) site. Residue Cys-1215 coordinates 2-oxoglutarate. Position 1221 (His-1221) interacts with Zn(2+). Fe cation contacts are provided by His-1223 and Asp-1225. His-1257 is a 2-oxoglutarate binding site. Disordered stretches follow at residues 1298–1356 (LSEP…QTKP), 1469–1516 (GMNQ…APME), and 1719–1753 (PAVN…VKEE). Residues 1308–1339 (RQLDAKKATAEKKKLQKEKLVSPDKTKQEPSD) show a composition bias toward basic and acidic residues. Residues 1340 to 1355 (TKTCQQNPGVPQQQTK) are compositionally biased toward polar residues. Over residues 1482-1491 (NYRRSSEVPH) the composition is skewed to basic and acidic residues. Composition is skewed to polar residues over residues 1494-1503 (SLQNSNSQKS) and 1720-1732 (AVNS…SQNH). His-1794 is a binding site for Fe cation. 1809–1811 (RIS) contributes to the 2-oxoglutarate binding site. The stretch at 1827–1860 (LALWEAKMKQLAERARVKEEEAAKLGIKQEVKSL) forms a coiled coil.

This sequence belongs to the TET family. It depends on Fe(2+) as a cofactor. Requires Zn(2+) as cofactor. In terms of tissue distribution, detected in embryo (at protein level). Detected in embryonic head, in developing brain and eye.

It localises to the nucleus. It is found in the chromosome. It catalyses the reaction a 5-methyl-2'-deoxycytidine in DNA + 2-oxoglutarate + O2 = a 5-hydroxymethyl-2'-deoxycytidine in DNA + succinate + CO2. It carries out the reaction a 5-hydroxymethyl-2'-deoxycytidine in DNA + 2-oxoglutarate + O2 = a 5-formyl-2'-deoxycytidine in DNA + succinate + CO2 + H2O. The enzyme catalyses a 5-formyl-2'-deoxycytidine in DNA + 2-oxoglutarate + O2 = a 5-carboxyl-2'-deoxycytidine in DNA + succinate + CO2 + H(+). In terms of biological role, dioxygenase that catalyzes the conversion of the modified genomic base 5-methylcytosine (5mC) into 5-hydroxymethylcytosine (5hmC) and plays a key role in epigenetic chromatin reprogramming during embryonic development. Conversion of 5mC into 5hmC probably constitutes the first step in cytosine demethylation. Selectively binds to the promoter region of target genes and contributes to regulate the expression of numerous developmental genes, including pax6, rax, sox9 and six3. May also contribute to the regulation of target genes in ways that do not require its enzyme activity. The polypeptide is Methylcytosine dioxygenase tet3-B (Xenopus laevis (African clawed frog)).